Here is an 828-residue protein sequence, read N- to C-terminus: BEN domain-containing protein 3 (828 aa).

Lys20 participates in a covalent cross-link: Glycyl lysine isopeptide (Lys-Gly) (interchain with G-Cter in SUMO); alternate. Lys20 participates in a covalent cross-link: Glycyl lysine isopeptide (Lys-Gly) (interchain with G-Cter in SUMO1); alternate. Lys20 participates in a covalent cross-link: Glycyl lysine isopeptide (Lys-Gly) (interchain with G-Cter in SUMO2); alternate. Glycyl lysine isopeptide (Lys-Gly) (interchain with G-Cter in SUMO2) cross-links involve residues Lys41, Lys56, Lys58, Lys73, Lys128, Lys129, Lys137, Lys142, and Lys158. A Nuclear localization signal motif is present at residues 56–58 (KRK). Residue Ser164 is modified to Phosphoserine. Residues 164–184 (SPSSLRLLNEPQKRDCGSTGA) are disordered. Lys176 is covalently cross-linked (Glycyl lysine isopeptide (Lys-Gly) (interchain with G-Cter in SUMO2)). The region spanning 242-343 (PPPEYQLTAA…DFFSRFWAQR (102 aa)) is the BEN 1 domain. At Ser379 the chain carries Phosphoserine. The region spanning 387 to 487 (ASDHVVDTQD…DELEGLGLDA (101 aa)) is the BEN 2 domain. Residue Lys427 forms a Glycyl lysine isopeptide (Lys-Gly) (interchain with G-Cter in SUMO2) linkage. Positions 483–504 (LGLDAGSEGDPPRDDCYDSSSL) are disordered. Ser489 is subject to Phosphoserine. Lys512 is covalently cross-linked (Glycyl lysine isopeptide (Lys-Gly) (interchain with G-Cter in SUMO); alternate). Lys512 is covalently cross-linked (Glycyl lysine isopeptide (Lys-Gly) (interchain with G-Cter in SUMO2); alternate). Lys528 participates in a covalent cross-link: Glycyl lysine isopeptide (Lys-Gly) (interchain with G-Cter in SUMO2). A BEN 3 domain is found at 548 to 650 (VPGADCLLSK…ERCRRRDTEQ (103 aa)). A Glycyl lysine isopeptide (Lys-Gly) (interchain with G-Cter in SUMO2) cross-link involves residue Lys700. Residues 715 to 816 (VPSPYLLSDK…ERCRRPNRKK (102 aa)) form the BEN 4 domain.

In terms of assembly, homooligomer, probably a homooctamer. Interacts with HDAC2 and HDAC3, but not HDAC1. Interacts with SALL4. Interacts with SMARCA5/SNF2H, BAZ2A/TIP5 and USP21. Interacts with the nucleosome remodeling and histone deacetylase (NuRD) repressor complex. Interacts (via BEN domains 1 and 3) with ERCC6L (via N-terminal TPR repeat); the interaction is direct. Post-translationally, sumoylated at Lys-20 by SUMO1 and at Lys-512 by SUMO1, SUMO2 and SUMO3. Sumoylation probably occurs sequentially, with that of Lys-20 preceding that of Lys-512. It does not alter association with heterochromatin, but is required for the repression of transcription. As to expression, expressed at least in heart, kidney, liver, ovary and spleen, with highest levels in spleen and lowest in heart. Expressed on the surface of T-cells.

The protein localises to the nucleus. It localises to the nucleolus. In terms of biological role, transcriptional repressor which associates with the NoRC (nucleolar remodeling complex) complex and plays a key role in repressing rDNA transcription. The sumoylated form modulates the stability of the NoRC complex component BAZ2A/TIP5 by controlling its USP21-mediated deubiquitination. Binds to unmethylated major satellite DNA and is involved in the recruitment of the Polycomb repressive complex 2 (PRC2) to major satellites. Stimulates the ERCC6L translocase and ATPase activities. The protein is BEN domain-containing protein 3 (BEND3) of Homo sapiens (Human).